A 474-amino-acid polypeptide reads, in one-letter code: Siroheme synthase (474 aa).

The precorrin-2 dehydrogenase /sirohydrochlorin ferrochelatase stretch occupies residues methionine 1–leucine 202. NAD(+) contacts are provided by residues alanine 22–valine 23 and proline 41–alanine 42. Serine 126 is subject to Phosphoserine. The tract at residues glycine 218–isoleucine 474 is uroporphyrinogen-III C-methyltransferase. Proline 227 contacts S-adenosyl-L-methionine. Aspartate 250 functions as the Proton acceptor in the catalytic mechanism. The active-site Proton donor is the lysine 272. Residues glycine 303–aspartate 305, isoleucine 308, threonine 333–alanine 334, methionine 385, and glycine 414 each bind S-adenosyl-L-methionine.

In the N-terminal section; belongs to the precorrin-2 dehydrogenase / sirohydrochlorin ferrochelatase family. This sequence in the C-terminal section; belongs to the precorrin methyltransferase family.

The enzyme catalyses uroporphyrinogen III + 2 S-adenosyl-L-methionine = precorrin-2 + 2 S-adenosyl-L-homocysteine + H(+). It catalyses the reaction precorrin-2 + NAD(+) = sirohydrochlorin + NADH + 2 H(+). It carries out the reaction siroheme + 2 H(+) = sirohydrochlorin + Fe(2+). It participates in cofactor biosynthesis; adenosylcobalamin biosynthesis; precorrin-2 from uroporphyrinogen III: step 1/1. It functions in the pathway cofactor biosynthesis; adenosylcobalamin biosynthesis; sirohydrochlorin from precorrin-2: step 1/1. The protein operates within porphyrin-containing compound metabolism; siroheme biosynthesis; precorrin-2 from uroporphyrinogen III: step 1/1. Its pathway is porphyrin-containing compound metabolism; siroheme biosynthesis; siroheme from sirohydrochlorin: step 1/1. It participates in porphyrin-containing compound metabolism; siroheme biosynthesis; sirohydrochlorin from precorrin-2: step 1/1. In terms of biological role, multifunctional enzyme that catalyzes the SAM-dependent methylations of uroporphyrinogen III at position C-2 and C-7 to form precorrin-2 via precorrin-1. Then it catalyzes the NAD-dependent ring dehydrogenation of precorrin-2 to yield sirohydrochlorin. Finally, it catalyzes the ferrochelation of sirohydrochlorin to yield siroheme. This Blochmanniella pennsylvanica (strain BPEN) protein is Siroheme synthase.